The primary structure comprises 534 residues: Probable bifunctional tRNA threonylcarbamoyladenosine biosynthesis protein (534 aa).

Residues 1–325 (MLCLGIEGTA…YRTDEVDVPW (325 aa)) are kae1. His108, His112, and Tyr129 together coordinate Fe cation. Residues 129–133 (YVSGG), Asp161, Gly174, Glu178, and Asn258 contribute to the L-threonylcarbamoyladenylate site. Asp286 serves as a coordination point for Fe cation. Positions 335-534 (LPPDILAKGA…EIESRGRYTD (200 aa)) constitute a Protein kinase domain. ATP-binding positions include 340–348 (LAKGAEANI) and Lys361. Asp451 serves as the catalytic Proton acceptor; for kinase activity.

The protein in the N-terminal section; belongs to the KAE1 / TsaD family. It in the C-terminal section; belongs to the protein kinase superfamily. Tyr protein kinase family. BUD32 subfamily. In terms of assembly, component of the KEOPS complex that consists of Kae1, Bud32, Cgi121 and Pcc1; the whole complex dimerizes. Fe(2+) serves as cofactor.

It is found in the cytoplasm. The catalysed reaction is L-seryl-[protein] + ATP = O-phospho-L-seryl-[protein] + ADP + H(+). The enzyme catalyses L-threonyl-[protein] + ATP = O-phospho-L-threonyl-[protein] + ADP + H(+). It catalyses the reaction L-threonylcarbamoyladenylate + adenosine(37) in tRNA = N(6)-L-threonylcarbamoyladenosine(37) in tRNA + AMP + H(+). Required for the formation of a threonylcarbamoyl group on adenosine at position 37 (t(6)A37) in tRNAs that read codons beginning with adenine. Is a component of the KEOPS complex that is probably involved in the transfer of the threonylcarbamoyl moiety of threonylcarbamoyl-AMP (TC-AMP) to the N6 group of A37. The Kae1 domain likely plays a direct catalytic role in this reaction. The Bud32 domain probably displays kinase activity that regulates Kae1 function. The protein is Probable bifunctional tRNA threonylcarbamoyladenosine biosynthesis protein of Methanothermobacter thermautotrophicus (strain ATCC 29096 / DSM 1053 / JCM 10044 / NBRC 100330 / Delta H) (Methanobacterium thermoautotrophicum).